Here is a 363-residue protein sequence, read N- to C-terminus: Cytochrome P450 CYP82D47 (363 aa).

A heme-binding site is contributed by Cys342.

Belongs to the cytochrome P450 family. Heme is required as a cofactor.

Functionally, probable heme-thiolate monooxygenase. The sequence is that of Cytochrome P450 CYP82D47 from Panax ginseng (Korean ginseng).